The sequence spans 390 residues: Digeranylgeranylglycerophospholipid reductase (390 aa).

Positions 18, 37, 48, 49, 51, 98, 122, 278, 290, and 291 each coordinate FAD. Val368 is a binding site for a 2,3-bis-O-(geranylgeranyl)-sn-glycerol 1-phospholipid.

Belongs to the geranylgeranyl reductase family. DGGGPL reductase subfamily. The cofactor is FAD.

It catalyses the reaction a 2,3-bis-O-phytanyl-sn-glycerol 1-phospholipid + 8 A = a 2,3-bis-O-(geranylgeranyl)-sn-glycerol 1-phospholipid + 8 AH2. The enzyme catalyses 2,3-bis-O-(phytanyl)-sn-glycerol 1-phosphate + 8 A = 2,3-bis-O-(geranylgeranyl)-sn-glycerol 1-phosphate + 8 AH2. It carries out the reaction CDP-2,3-bis-O-(geranylgeranyl)-sn-glycerol + 8 AH2 = CDP-2,3-bis-O-(phytanyl)-sn-glycerol + 8 A. The catalysed reaction is archaetidylserine + 8 AH2 = 2,3-bis-O-phytanyl-sn-glycero-3-phospho-L-serine + 8 A. It functions in the pathway membrane lipid metabolism; glycerophospholipid metabolism. In terms of biological role, is involved in the reduction of 2,3-digeranylgeranylglycerophospholipids (unsaturated archaeols) into 2,3-diphytanylglycerophospholipids (saturated archaeols) in the biosynthesis of archaeal membrane lipids. Catalyzes the formation of archaetidic acid (2,3-di-O-phytanyl-sn-glyceryl phosphate) from 2,3-di-O-geranylgeranylglyceryl phosphate (DGGGP) via the hydrogenation of each double bond of the isoprenoid chains. Is also probably able to reduce double bonds of geranyl groups in CDP-2,3-bis-O-(geranylgeranyl)-sn-glycerol and archaetidylserine, thus acting at various stages in the biosynthesis of archaeal membrane lipids. The protein is Digeranylgeranylglycerophospholipid reductase of Methanococcus maripaludis (strain C7 / ATCC BAA-1331).